The sequence spans 411 residues: Na(+)-translocating NADH-quinone reductase subunit F (411 aa).

A helical transmembrane segment spans residues 5–25 (VILALGIAAFTVIVLVLVAII). Residues 36-130 (GDITIDINDD…NMEVELPEEI (95 aa)) form the 2Fe-2S ferredoxin-type domain. C73, C79, C82, and C114 together coordinate [2Fe-2S] cluster. An FAD-binding FR-type domain is found at 133 to 273 (VKKWECTVIS…SGPFGEFFAK (141 aa)). The segment at 276–393 (DAEMVFIGGG…PVMNAAVIKM (118 aa)) is catalytic.

Belongs to the NqrF family. In terms of assembly, composed of six subunits; NqrA, NqrB, NqrC, NqrD, NqrE and NqrF. [2Fe-2S] cluster is required as a cofactor. FAD serves as cofactor.

It is found in the cell inner membrane. It carries out the reaction a ubiquinone + n Na(+)(in) + NADH + H(+) = a ubiquinol + n Na(+)(out) + NAD(+). NQR complex catalyzes the reduction of ubiquinone-1 to ubiquinol by two successive reactions, coupled with the transport of Na(+) ions from the cytoplasm to the periplasm. The first step is catalyzed by NqrF, which accepts electrons from NADH and reduces ubiquinone-1 to ubisemiquinone by a one-electron transfer pathway. The chain is Na(+)-translocating NADH-quinone reductase subunit F from Haemophilus influenzae (strain ATCC 51907 / DSM 11121 / KW20 / Rd).